The primary structure comprises 304 residues: Voltage-dependent anion channel-forming protein YneE (304 aa).

The next 4 membrane-spanning stretches (helical) occupy residues 28–48 (LLLNFLLSIAVIIMLPWYTML), 50–70 (IKFTLAPFSILGVAIAIFLGF), 209–229 (AYTLILHRTVYLFCIMLPFAL), and 235–255 (YMTPFISVLISYTFIALDALA).

The protein belongs to the anion channel-forming bestrophin (TC 1.A.46) family.

The protein localises to the cell membrane. This Salmonella typhi protein is Voltage-dependent anion channel-forming protein YneE (yneE).